A 561-amino-acid polypeptide reads, in one-letter code: Long-chain-fatty-acid--CoA ligase (561 aa).

213 to 224 (YTGGTTGVAKGA) provides a ligand contact to ATP.

This sequence belongs to the ATP-dependent AMP-binding enzyme family. Mg(2+) serves as cofactor.

It localises to the membrane. It catalyses the reaction a long-chain fatty acid + ATP + CoA = a long-chain fatty acyl-CoA + AMP + diphosphate. The protein operates within lipid metabolism; fatty acid beta-oxidation. Catalyzes the esterification, concomitant with transport, of exogenous long-chain fatty acids into metabolically active CoA thioesters for subsequent degradation or incorporation into phospholipids. The sequence is that of Long-chain-fatty-acid--CoA ligase (fadD) from Escherichia coli O157:H7.